The sequence spans 141 residues: 3-hydroxyacyl-[acyl-carrier-protein] dehydratase FabZ (141 aa).

The active site involves His-47.

This sequence belongs to the thioester dehydratase family. FabZ subfamily.

Its subcellular location is the cytoplasm. It carries out the reaction a (3R)-hydroxyacyl-[ACP] = a (2E)-enoyl-[ACP] + H2O. Its function is as follows. Involved in unsaturated fatty acids biosynthesis. Catalyzes the dehydration of short chain beta-hydroxyacyl-ACPs and long chain saturated and unsaturated beta-hydroxyacyl-ACPs. This is 3-hydroxyacyl-[acyl-carrier-protein] dehydratase FabZ from Caldanaerobacter subterraneus subsp. tengcongensis (strain DSM 15242 / JCM 11007 / NBRC 100824 / MB4) (Thermoanaerobacter tengcongensis).